Reading from the N-terminus, the 155-residue chain is Cell division protein SepF (155 aa).

A compositionally biased stretch (basic and acidic residues) spans 22–46; the sequence is RYVEEPEQRDERPALEKGRAPKEKQ. Residues 22 to 54 form a disordered region; that stretch reads RYVEEPEQRDERPALEKGRAPKEKQTAGMEQNQ.

It belongs to the SepF family. In terms of assembly, homodimer. Interacts with FtsZ.

The protein resides in the cytoplasm. In terms of biological role, cell division protein that is part of the divisome complex and is recruited early to the Z-ring. Probably stimulates Z-ring formation, perhaps through the cross-linking of FtsZ protofilaments. Its function overlaps with FtsA. The chain is Cell division protein SepF from Shouchella clausii (strain KSM-K16) (Alkalihalobacillus clausii).